We begin with the raw amino-acid sequence, 459 residues long: Glutamate--tRNA ligase 2 (459 aa).

Residues 8-18 carry the 'HIGH' region motif; that stretch reads PSPTGYLHIGG. The 'KMSKS' region motif lies at 237-241; sequence KLSKR. Lys240 contacts ATP.

This sequence belongs to the class-I aminoacyl-tRNA synthetase family. Glutamate--tRNA ligase type 1 subfamily. In terms of assembly, monomer.

The protein resides in the cytoplasm. The enzyme catalyses tRNA(Glu) + L-glutamate + ATP = L-glutamyl-tRNA(Glu) + AMP + diphosphate. Functionally, catalyzes the attachment of glutamate to tRNA(Glu) in a two-step reaction: glutamate is first activated by ATP to form Glu-AMP and then transferred to the acceptor end of tRNA(Glu). The chain is Glutamate--tRNA ligase 2 from Campylobacter curvus (strain 525.92).